Here is a 191-residue protein sequence, read N- to C-terminus: Fe/S biogenesis protein NfuA (191 aa).

[4Fe-4S] cluster contacts are provided by Cys149 and Cys152.

This sequence belongs to the NfuA family. As to quaternary structure, homodimer. [4Fe-4S] cluster serves as cofactor.

Involved in iron-sulfur cluster biogenesis. Binds a 4Fe-4S cluster, can transfer this cluster to apoproteins, and thereby intervenes in the maturation of Fe/S proteins. Could also act as a scaffold/chaperone for damaged Fe/S proteins. In Photorhabdus laumondii subsp. laumondii (strain DSM 15139 / CIP 105565 / TT01) (Photorhabdus luminescens subsp. laumondii), this protein is Fe/S biogenesis protein NfuA.